A 346-amino-acid chain; its full sequence is D-alanine--D-alanine ligase (346 aa).

An ATP-grasp domain is found at 134–340; that stretch reads KFLAESLGVK…IDYTYIHSIQ (207 aa). Position 161–212 (161–212) interacts with ATP; it reads EYPVIIKPVRLGSSIGVSIVKSEAELDYALDVAFEFDNDVIVEPFIDGVKEF. Aspartate 284, glutamate 296, and asparagine 298 together coordinate Mg(2+).

Belongs to the D-alanine--D-alanine ligase family. It depends on Mg(2+) as a cofactor. The cofactor is Mn(2+).

It is found in the cytoplasm. The catalysed reaction is 2 D-alanine + ATP = D-alanyl-D-alanine + ADP + phosphate + H(+). It participates in cell wall biogenesis; peptidoglycan biosynthesis. Functionally, cell wall formation. The polypeptide is D-alanine--D-alanine ligase (Sulfurovum sp. (strain NBC37-1)).